The chain runs to 566 residues: Glucose starvation modulator protein 1 (566 aa).

The zn(2)-C6 fungal-type DNA-binding region spans 20-48; the sequence is CVFCHQKHLQCSNERPCKNCVKRNIAHGC. Disordered stretches follow at residues 65-93 and 250-270; these read PGAV…PMDS and KQAS…NTLS. The span at 83 to 93 shows a compositional bias: polar residues; it reads PVSTSVSPMDS. A compositionally biased stretch (low complexity) spans 253-270; that stretch reads SPSPSNTSTSENNTNTLS.

Belongs to the ERT1/acuK family.

The protein resides in the nucleus. Its function is as follows. Transcription factor which regulates nonfermentable carbon utilization. The chain is Glucose starvation modulator protein 1 (ZCF23) from Candida albicans (strain SC5314 / ATCC MYA-2876) (Yeast).